The primary structure comprises 244 residues: UDP-2,3-diacylglucosamine hydrolase (244 aa).

Aspartate 8, histidine 10, aspartate 41, asparagine 79, and histidine 114 together coordinate Mn(2+). 79-80 (NR) provides a ligand contact to substrate. Positions 122, 164, 167, and 195 each coordinate substrate. Mn(2+)-binding residues include histidine 195 and histidine 197.

The protein belongs to the LpxH family. It depends on Mn(2+) as a cofactor.

Its subcellular location is the cell inner membrane. The enzyme catalyses UDP-2-N,3-O-bis[(3R)-3-hydroxytetradecanoyl]-alpha-D-glucosamine + H2O = 2-N,3-O-bis[(3R)-3-hydroxytetradecanoyl]-alpha-D-glucosaminyl 1-phosphate + UMP + 2 H(+). Its pathway is glycolipid biosynthesis; lipid IV(A) biosynthesis; lipid IV(A) from (3R)-3-hydroxytetradecanoyl-[acyl-carrier-protein] and UDP-N-acetyl-alpha-D-glucosamine: step 4/6. In terms of biological role, hydrolyzes the pyrophosphate bond of UDP-2,3-diacylglucosamine to yield 2,3-diacylglucosamine 1-phosphate (lipid X) and UMP by catalyzing the attack of water at the alpha-P atom. Involved in the biosynthesis of lipid A, a phosphorylated glycolipid that anchors the lipopolysaccharide to the outer membrane of the cell. In Vibrio atlanticus (strain LGP32) (Vibrio splendidus (strain Mel32)), this protein is UDP-2,3-diacylglucosamine hydrolase.